Reading from the N-terminus, the 351-residue chain is Protein RecA (351 aa).

Residue 68 to 75 (GPESSGKT) participates in ATP binding.

This sequence belongs to the RecA family.

The protein resides in the cytoplasm. Functionally, can catalyze the hydrolysis of ATP in the presence of single-stranded DNA, the ATP-dependent uptake of single-stranded DNA by duplex DNA, and the ATP-dependent hybridization of homologous single-stranded DNAs. It interacts with LexA causing its activation and leading to its autocatalytic cleavage. This chain is Protein RecA, found in Chloroflexus aggregans (strain MD-66 / DSM 9485).